A 701-amino-acid polypeptide reads, in one-letter code: Larval serum protein 2 (701 aa).

The signal sequence occupies residues 1–21 (MKSFTVIALAAVALLATLGQA). Asn204 is a glycosylation site (N-linked (GlcNAc...) asparagine).

The protein belongs to the hemocyanin family. As to quaternary structure, homohexamer.

It is found in the secreted. The protein resides in the extracellular space. In terms of biological role, larval storage protein (LSP) which may serve as a store of amino acids for synthesis of adult proteins. The polypeptide is Larval serum protein 2 (Lsp2) (Drosophila melanogaster (Fruit fly)).